Here is a 123-residue protein sequence, read N- to C-terminus: Small ribosomal subunit protein uS12 (123 aa).

Aspartate 89 is subject to 3-methylthioaspartic acid.

Belongs to the universal ribosomal protein uS12 family. Part of the 30S ribosomal subunit. Contacts proteins S8 and S17. May interact with IF1 in the 30S initiation complex.

In terms of biological role, with S4 and S5 plays an important role in translational accuracy. Functionally, interacts with and stabilizes bases of the 16S rRNA that are involved in tRNA selection in the A site and with the mRNA backbone. Located at the interface of the 30S and 50S subunits, it traverses the body of the 30S subunit contacting proteins on the other side and probably holding the rRNA structure together. The combined cluster of proteins S8, S12 and S17 appears to hold together the shoulder and platform of the 30S subunit. The protein is Small ribosomal subunit protein uS12 of Methylobacterium nodulans (strain LMG 21967 / CNCM I-2342 / ORS 2060).